The sequence spans 149 residues: Large ribosomal subunit protein bL9 (149 aa).

This sequence belongs to the bacterial ribosomal protein bL9 family.

Functionally, binds to the 23S rRNA. The polypeptide is Large ribosomal subunit protein bL9 (Helicobacter pylori (strain G27)).